A 154-amino-acid chain; its full sequence is UPF0225 protein YpsIP31758_1970 (154 aa).

It belongs to the UPF0225 family.

This Yersinia pseudotuberculosis serotype O:1b (strain IP 31758) protein is UPF0225 protein YpsIP31758_1970.